Reading from the N-terminus, the 176-residue chain is Putative ribosomal protein eS10-like (176 aa).

The disordered stretch occupies residues 104-176 (TLHRSRPETG…CGRGRGQPPQ (73 aa)). The span at 108–139 (SRPETGRPRPKGLEGKRPARLTRREADRDTYR) shows a compositional bias: basic and acidic residues.

Belongs to the eukaryotic ribosomal protein eS10 family.

The polypeptide is Putative ribosomal protein eS10-like (RPS10P5) (Homo sapiens (Human)).